A 505-amino-acid chain; its full sequence is Glycerol kinase (505 aa).

Threonine 12 contributes to the ADP binding site. Residues threonine 12, threonine 13, and serine 14 each coordinate ATP. Threonine 12 contacts sn-glycerol 3-phosphate. Residue arginine 16 participates in ADP binding. Sn-glycerol 3-phosphate-binding residues include arginine 82, glutamate 83, tyrosine 134, and aspartate 246. Residues arginine 82, glutamate 83, tyrosine 134, aspartate 246, and glutamine 247 each coordinate glycerol. Residues threonine 268 and glycine 312 each coordinate ADP. Threonine 268, glycine 312, glutamine 316, and glycine 413 together coordinate ATP. 2 residues coordinate ADP: glycine 413 and asparagine 417.

It belongs to the FGGY kinase family.

It carries out the reaction glycerol + ATP = sn-glycerol 3-phosphate + ADP + H(+). It participates in polyol metabolism; glycerol degradation via glycerol kinase pathway; sn-glycerol 3-phosphate from glycerol: step 1/1. Inhibited by fructose 1,6-bisphosphate (FBP). Functionally, key enzyme in the regulation of glycerol uptake and metabolism. Catalyzes the phosphorylation of glycerol to yield sn-glycerol 3-phosphate. The protein is Glycerol kinase of Beutenbergia cavernae (strain ATCC BAA-8 / DSM 12333 / CCUG 43141 / JCM 11478 / NBRC 16432 / NCIMB 13614 / HKI 0122).